Consider the following 133-residue polypeptide: ATP synthase epsilon chain, chloroplastic (133 aa).

This sequence belongs to the ATPase epsilon chain family. In terms of assembly, F-type ATPases have 2 components, CF(1) - the catalytic core - and CF(0) - the membrane proton channel. CF(1) has five subunits: alpha(3), beta(3), gamma(1), delta(1), epsilon(1). CF(0) has three main subunits: a, b and c.

It is found in the plastid. It localises to the chloroplast thylakoid membrane. In terms of biological role, produces ATP from ADP in the presence of a proton gradient across the membrane. The polypeptide is ATP synthase epsilon chain, chloroplastic (Helianthus annuus (Common sunflower)).